We begin with the raw amino-acid sequence, 72 residues long: Peptide Ctri9194 (72 aa).

Residues 1 to 23 (MKTQNVLLSFGIVFLMISFSSET) form the signal peptide. Ile-38 carries the post-translational modification Isoleucine amide. The propeptide occupies 42–72 (SLKDVESLDFLFDPTFTAADLAVLENALEDY).

This sequence belongs to the non-disulfide-bridged peptide (NDBP) superfamily. Short antimicrobial peptide (group 4) family. As to expression, expressed by the venom gland.

It is found in the secreted. Functionally, antimicrobial peptide. This chain is Peptide Ctri9194, found in Chaerilus tricostatus (Scorpion).